Here is a 466-residue protein sequence, read N- to C-terminus: 3-isopropylmalate dehydratase large subunit (466 aa).

Residues C347, C407, and C410 each coordinate [4Fe-4S] cluster.

It belongs to the aconitase/IPM isomerase family. LeuC type 1 subfamily. In terms of assembly, heterodimer of LeuC and LeuD. The cofactor is [4Fe-4S] cluster.

It carries out the reaction (2R,3S)-3-isopropylmalate = (2S)-2-isopropylmalate. Its pathway is amino-acid biosynthesis; L-leucine biosynthesis; L-leucine from 3-methyl-2-oxobutanoate: step 2/4. Its function is as follows. Catalyzes the isomerization between 2-isopropylmalate and 3-isopropylmalate, via the formation of 2-isopropylmaleate. The polypeptide is 3-isopropylmalate dehydratase large subunit (Acidiphilium cryptum (strain JF-5)).